A 125-amino-acid chain; its full sequence is DNA-directed RNA polymerases I and III subunit RPAC2 (125 aa).

Belongs to the archaeal Rpo11/eukaryotic RPB11/RPC19 RNA polymerase subunit family. Component of the RNA polymerase I (Pol I) and RNA polymerase III (Pol III) complexes consisting of 14 and 17 subunits, respectively.

The protein resides in the nucleus. Its function is as follows. DNA-dependent RNA polymerase catalyzes the transcription of DNA into RNA using the four ribonucleoside triphosphates as substrates. Common core component of RNA polymerases I and III which synthesize ribosomal RNA precursors and small RNAs, such as 5S rRNA and tRNAs, respectively. The polypeptide is DNA-directed RNA polymerases I and III subunit RPAC2 (rpc19) (Schizosaccharomyces pombe (strain 972 / ATCC 24843) (Fission yeast)).